A 152-amino-acid chain; its full sequence is 6,7-dimethyl-8-ribityllumazine synthase (152 aa).

Residues Phe18, 49 to 51, and 75 to 77 each bind 5-amino-6-(D-ribitylamino)uracil; these read ALE and CVI. 80–81 provides a ligand contact to (2S)-2-hydroxy-3-oxobutyl phosphate; it reads ET. Catalysis depends on His83, which acts as the Proton donor. Asn108 contributes to the 5-amino-6-(D-ribitylamino)uracil binding site. A (2S)-2-hydroxy-3-oxobutyl phosphate-binding site is contributed by Arg122.

Belongs to the DMRL synthase family.

It catalyses the reaction (2S)-2-hydroxy-3-oxobutyl phosphate + 5-amino-6-(D-ribitylamino)uracil = 6,7-dimethyl-8-(1-D-ribityl)lumazine + phosphate + 2 H2O + H(+). Its pathway is cofactor biosynthesis; riboflavin biosynthesis; riboflavin from 2-hydroxy-3-oxobutyl phosphate and 5-amino-6-(D-ribitylamino)uracil: step 1/2. Its function is as follows. Catalyzes the formation of 6,7-dimethyl-8-ribityllumazine by condensation of 5-amino-6-(D-ribitylamino)uracil with 3,4-dihydroxy-2-butanone 4-phosphate. This is the penultimate step in the biosynthesis of riboflavin. This Bartonella bacilliformis (strain ATCC 35685 / KC583 / Herrer 020/F12,63) protein is 6,7-dimethyl-8-ribityllumazine synthase.